A 599-amino-acid polypeptide reads, in one-letter code: Elongation factor 4 (599 aa).

Residues 2–185 (KYIRNFSIIA…RIIIDIPVPQ (184 aa)) enclose the tr-type G domain. GTP contacts are provided by residues 14–19 (NHGKST) and 132–135 (NKID).

It belongs to the TRAFAC class translation factor GTPase superfamily. Classic translation factor GTPase family. LepA subfamily.

Its subcellular location is the cell inner membrane. It catalyses the reaction GTP + H2O = GDP + phosphate + H(+). Its function is as follows. Required for accurate and efficient protein synthesis under certain stress conditions. May act as a fidelity factor of the translation reaction, by catalyzing a one-codon backward translocation of tRNAs on improperly translocated ribosomes. Back-translocation proceeds from a post-translocation (POST) complex to a pre-translocation (PRE) complex, thus giving elongation factor G a second chance to translocate the tRNAs correctly. Binds to ribosomes in a GTP-dependent manner. The sequence is that of Elongation factor 4 from Blochmanniella floridana.